The following is a 261-amino-acid chain: Small ribosomal subunit protein eS1B (261 aa).

The segment covering 1–18 (MTLGKNKRISKGGKRGKK) has biased composition (basic residues). Residues 1–23 (MTLGKNKRISKGGKRGKKKAQET) form a disordered region.

Belongs to the eukaryotic ribosomal protein eS1 family. As to quaternary structure, component of the small ribosomal subunit. Mature ribosomes consist of a small (40S) and a large (60S) subunit. The 40S subunit contains about 33 different proteins and 1 molecule of RNA (18S). The 60S subunit contains about 49 different proteins and 3 molecules of RNA (25S, 5.8S and 5S).

It localises to the cytoplasm. This chain is Small ribosomal subunit protein eS1B, found in Trypanosoma cruzi (strain CL Brener).